We begin with the raw amino-acid sequence, 226 residues long: Large ribosomal subunit protein uL1 (226 aa).

It belongs to the universal ribosomal protein uL1 family. As to quaternary structure, part of the 50S ribosomal subunit.

Functionally, binds directly to 23S rRNA. Probably involved in E site tRNA release. Protein L1 is also a translational repressor protein, it controls the translation of its operon by binding to its mRNA. The chain is Large ribosomal subunit protein uL1 from Korarchaeum cryptofilum (strain OPF8).